Reading from the N-terminus, the 483-residue chain is MKVLPASGLAVLLVTALKFSAAAPSLFAATPRTSRNNYHLAQAYLDKYYTKKGGHQVGEMVAKGGNSMVKKIKELQAFFGLRVTGKLDRTTMDVIKRPRCGVPDVANYRLFPGEPKWKKNTLTYRISKYTPSMTPAEVDKAMEMALQAWSSAVPLSFVRVNAGEADIMISFETGDHGDSYPFDGPRGTLAHAFAPGEGLGGDTHFDNAEKWTMGMNGFNLFTVAAHEFGHALGLAHSTDPSALMYPTYKYQNPYGFHLPKDDVKGIQALYGPRKTFTGKPTVPHGPPHNPSLPDICDSSSSFDAVTMLGKELLFFRDRIFWRRQVHLMSGIRPSTITSSFPQLMSNVDAAYEVADRGMAYFFKGPHYWITRGFQMQGPPRTIYDFGFPRYVQRIDAAVHLKDTQKTLFFVGDEYYSYDERKRKMDKDYPKNTEEEFSGVNGQIDAAVELNGYIYFFSGPKAYKYDTEKEDVVSVLKSNSWIGC.

Positions 1–22 are cleaved as a signal peptide; it reads MKVLPASGLAVLLVTALKFSAA. A propeptide spans 23–107 (activation peptide); that stretch reads APSLFAATPR…PRCGVPDVAN (85 aa). A Cysteine switch motif is present at residues 98-105; sequence PRCGVPDV. A Zn(2+)-binding site is contributed by C100. Residues E164, A165, and D166 each contribute to the Ca(2+) site. Zn(2+)-binding residues include H176 and D178. Ca(2+) contacts are provided by D183, G184, R186, and T188. H191 is a binding site for Zn(2+). The Ca(2+) site is built by E197, G198, G200, and D202. H204 serves as a coordination point for Zn(2+). D206 and E209 together coordinate Ca(2+). H226 lines the Zn(2+) pocket. Residue E227 is part of the active site. Residues H230 and H236 each contribute to the Zn(2+) site. Hemopexin repeat units lie at residues 293-343, 344-389, 391-439, and 440-483; these read PDIC…FPQL, MSNV…GFPR, VQRI…FSGV, and NGQI…WIGC. Residues C296 and C483 are joined by a disulfide bond.

It belongs to the peptidase M10A family. Requires Zn(2+) as cofactor. The cofactor is Ca(2+). Autoactivates at least at the 107-Asn-|-Tyr-108 site. As to expression, expressed specifically in the enamel organ.

It is found in the secreted. Its subcellular location is the extracellular space. The protein resides in the extracellular matrix. Functionally, degrades amelogenin, the major protein component of the enamel matrix and two of the macromolecules characterizing the cartilage extracellular matrix: aggrecan and the cartilage oligomeric matrix protein (COMP). May play a central role in tooth enamel formation. In Sus scrofa (Pig), this protein is Matrix metalloproteinase-20 (MMP20).